A 584-amino-acid chain; its full sequence is Transcription factor 7-like 1 (584 aa).

Gly residues predominate over residues 1 to 28 (MPQLGGGRGGAGGGGGGSGAGATSGGDD). The CTNNB1-binding stretch occupies residues 1-71 (MPQLGGGRGG…VKSSLVNESE (71 aa)). 3 disordered regions span residues 1-99 (MPQL…RDYF), 159-179 (ATVK…VPVV), and 194-231 (YSND…SPYY). A compositionally biased stretch (low complexity) spans 64 to 78 (SSLVNESENQSSSSD). The segment covering 80–99 (EAERRPQPARDAFQKPRDYF) has biased composition (basic and acidic residues). The HMG box DNA-binding region spans 342 to 410 (VKKPLNAFML…LHAQLYPTWS (69 aa)). The disordered stretch occupies residues 412–501 (RDNYGKKKKR…HSEQAQPLSL (90 aa)). Residues 417–423 (KKKKRKR) carry the Nuclear localization signal motif. Low complexity-rich tracts occupy residues 427–437 (LSQTQSQQQIQ) and 470–491 (SALD…PAAT). Residues 492 to 501 (HSEQAQPLSL) are compositionally biased toward polar residues.

This sequence belongs to the TCF/LEF family. As to quaternary structure, binds the armadillo repeat of CTNNB1 and forms a stable complex. Interacts with DAZAP2. As to expression, detected in the basal layer of epidermis and in outer root sheath and bulge of hair follicles.

The protein resides in the nucleus. Its function is as follows. Participates in the Wnt signaling pathway. Binds to DNA and acts as a repressor in the absence of CTNNB1, and as an activator in its presence. Necessary for the terminal differentiation of epidermal cells, the formation of keratohyalin granules and the development of the barrier function of the epidermis. This chain is Transcription factor 7-like 1 (Tcf7l1), found in Mus musculus (Mouse).